The chain runs to 234 residues: Phosphoglycolate phosphatase (234 aa).

Aspartate 8 functions as the Nucleophile in the catalytic mechanism. The Mg(2+) site is built by aspartate 8 and aspartate 10. Lysine 155 serves as a coordination point for substrate. Mg(2+) contacts are provided by aspartate 178 and aspartate 182.

The protein belongs to the archaeal SPP-like hydrolase family. It depends on Mg(2+) as a cofactor.

The catalysed reaction is 2-phosphoglycolate + H2O = glycolate + phosphate. In terms of biological role, catalyzes the dephosphorylation of 2-phosphoglycolate. The protein is Phosphoglycolate phosphatase of Thermococcus sibiricus (strain DSM 12597 / MM 739).